A 207-amino-acid polypeptide reads, in one-letter code: Large ribosomal subunit protein uL4 (207 aa).

Residues 44 to 76 are disordered; that stretch reads KRRGTASAKTRSEVRGGGRKPWRQKGTGRARHG. Basic residues predominate over residues 60–76; that stretch reads GGRKPWRQKGTGRARHG.

This sequence belongs to the universal ribosomal protein uL4 family. Part of the 50S ribosomal subunit.

One of the primary rRNA binding proteins, this protein initially binds near the 5'-end of the 23S rRNA. It is important during the early stages of 50S assembly. It makes multiple contacts with different domains of the 23S rRNA in the assembled 50S subunit and ribosome. Its function is as follows. Forms part of the polypeptide exit tunnel. The protein is Large ribosomal subunit protein uL4 of Natranaerobius thermophilus (strain ATCC BAA-1301 / DSM 18059 / JW/NM-WN-LF).